A 182-amino-acid chain; its full sequence is T-cell surface glycoprotein CD3 gamma chain (182 aa).

An N-terminal signal peptide occupies residues 1–22 (MEQGKGLAVLILAIILLQGTLA). The Extracellular segment spans residues 23 to 116 (QSIKGNHLVK…CIELNAATIS (94 aa)). The Ig-like domain occupies 37–94 (QEDGSVLLTCDAEAKNITWFKDGKMIGFLTEDKKKWNLGSNAKDPRGMYQCKGSQNKS). Cys46 and Cys87 are joined by a disulfide. 2 N-linked (GlcNAc...) asparagine glycosylation sites follow: Asn52 and Asn92. A helical transmembrane segment spans residues 117–137 (GFLFAEIVSIFVLAVGVYFIA). Residues 138-182 (GQDGVRQSRASDKQTLLPNDQLYQPLKDREDDQYSHLQGNQLRRN) are Cytoplasmic-facing. The residue at position 145 (Ser145) is a Phosphoserine. The residue at position 148 (Ser148) is a Phosphoserine; by PKC. In terms of domain architecture, ITAM spans 149–177 (DKQTLLPNDQLYQPLKDREDDQYSHLQGN). The Di-leucine motif signature appears at 153–154 (LL).

As to quaternary structure, the TCR-CD3 complex is composed of a CD3D/CD3E and a CD3G/CD3E heterodimers that preferentially associate with TCRalpha and TCRbeta, respectively, to form TCRalpha/CD3E/CD3G and TCRbeta/CD3G/CD3E trimers. In turn, the hexamer interacts with CD3Z homodimer to form the TCR-CD3 complex. Alternatively, TCRalpha and TCRbeta can be replaced by TCRgamma and TCRdelta. Post-translationally, phosphorylated on Tyr residues after T-cell receptor triggering by LCK in association with CD4/CD8. Phosphorylated also by PKC; leading to the TCR complex down-regulation. Phosphorylated on Tyr residues after T-cell receptor triggering by LCK in association with CD4/CD8.

The protein resides in the cell membrane. Part of the TCR-CD3 complex present on T-lymphocyte cell surface that plays an essential role in adaptive immune response. When antigen presenting cells (APCs) activate T-cell receptor (TCR), TCR-mediated signals are transmitted across the cell membrane by the CD3 chains CD3D, CD3E, CD3G and CD3Z. All CD3 chains contain immunoreceptor tyrosine-based activation motifs (ITAMs) in their cytoplasmic domain. Upon TCR engagement, these motifs become phosphorylated by Src family protein tyrosine kinases LCK and FYN, resulting in the activation of downstream signaling pathways. In addition to this role of signal transduction in T-cell activation, CD3G plays an essential role in the dynamic regulation of TCR expression at the cell surface. Indeed, constitutive TCR cycling is dependent on the di-leucine-based (diL) receptor-sorting motif present in CD3G. The protein is T-cell surface glycoprotein CD3 gamma chain (CD3G) of Homo sapiens (Human).